Reading from the N-terminus, the 257-residue chain is MSLEIVPFVVAIPARFSASRLPGKPLRLLGGRPLIHRVAERALSTGAREVWVATDDVRIAEAVASLDGVHVAMTANTHLSGSDRLAECARIAGWDPEVCVVNLQGDEPFAPAAGIRAVAALLHHSNADMATLATTIDKSEDLFNPNIVKLVCNTHGEALYFSRAPIPWNRDTFATTREPTPLGPWLRHIGLYACNAGFLQRFTTMQPGTLEQIESLEQLRVLEAGHRIAVRITPEHFPPGIDTPEDLAKAEKALEDV.

It belongs to the KdsB family.

It is found in the cytoplasm. The enzyme catalyses 3-deoxy-alpha-D-manno-oct-2-ulosonate + CTP = CMP-3-deoxy-beta-D-manno-octulosonate + diphosphate. The protein operates within nucleotide-sugar biosynthesis; CMP-3-deoxy-D-manno-octulosonate biosynthesis; CMP-3-deoxy-D-manno-octulosonate from 3-deoxy-D-manno-octulosonate and CTP: step 1/1. Its pathway is bacterial outer membrane biogenesis; lipopolysaccharide biosynthesis. Activates KDO (a required 8-carbon sugar) for incorporation into bacterial lipopolysaccharide in Gram-negative bacteria. This Xylella fastidiosa (strain M23) protein is 3-deoxy-manno-octulosonate cytidylyltransferase.